The chain runs to 478 residues: UDP-N-acetylmuramate--L-alanine ligase (478 aa).

An ATP-binding site is contributed by 122 to 128; the sequence is GTHGKTT.

Belongs to the MurCDEF family.

Its subcellular location is the cytoplasm. It carries out the reaction UDP-N-acetyl-alpha-D-muramate + L-alanine + ATP = UDP-N-acetyl-alpha-D-muramoyl-L-alanine + ADP + phosphate + H(+). It functions in the pathway cell wall biogenesis; peptidoglycan biosynthesis. Functionally, cell wall formation. The protein is UDP-N-acetylmuramate--L-alanine ligase of Stenotrophomonas maltophilia (strain K279a).